The following is a 1138-amino-acid chain: MSVPDYMQCAEDHQTLLVVVQPVGIVSEENFFRIYKRISSVSQISVRDSQRALYIRYRHHYPPENSEWGDFQTHRKVVGLITITDCFSAKDWPQIFEKFHVQKEIYGSTLYDSRLFVFGLQGEIAEQPRTDVAFYPSYEDCATVEKRIEDFVESLFIVLESKRLDRATDKSGDKIPLLCVPFEKKDFVGLDTDSRHYKKRCQGRMRKHVGDLCLQAGMLQDSLVHYHMSVELLRSVNDFLWLGAALEGLCSASVIYHYPGGTGGKAGARRFPGSALPAEAANRHRPGALTTNGINADTSTEIGRAKNCLSPEDIIEKYKEAISYYSKYKNAGVIELEACVKAVRVLAIQKRSMEASEFLQNAVYINLRQLSEEEKIQRYSILSELYELIGFHRKSAFFKRVAAMQCVAPSISEPGWRACYKLLLETLPGYSLSLDPQDFNKGTHRGWAAVQMRLLHELVYASRRMGNPALSVRHLSFLLQTMLDFLSDQEKKDVTQSLENYTSKCPGTMELLTLPDGLTLPPVPFTKLPIVRRVKLLDLPASLRPQKMKSSLGPSVSAKSPFIYSPIIAHSRGEERSKKIDFQWVQGDVCEVQLMVYNPMPFELRVENMGLLTSGVEFESLPAALSLPAESGLYPVTLVGVPQTTGTITVSGYHTTVFGVFSDCLLDSLPGIKTSGSTVEVIPALPRLQISTSLPRSAHSLQPSSGDKISTNVSVQLYNGETQQLVVRLENIGMEPLEKLEVTSKILTTKEKLYGDFLSWKLEDTLAQFPLQPGKVATFTISIKVKLDFSCQENLLQDLSDDGISVSGFPLCSPFRQVVRPRVESKPVNAAEGGRPGEPCHVKTLEAVLNFKYSGGPGHVEGYYRNLALGLHVEVEPSVFFTRVSTLPATSTRQCHLLLDVFNATEHELSVGARSDEELILHAGECQRMAIQVDKFNFESFPESPADKGQFANSKHLEEERQEARGLEINSKLDIHWTIPSLKRTGEASVEGLLNQLVLEHLQLAPLLWDVLVDGQPCDCQAAACRVGDPVRLEVRLTNRSPRSVGPFALSVVPFQDHQNGVHSYDLRHAVSFVGSGTFYLDKVQPSGQAACLGALLFLYTGDFFLHIRFHEDGPSKELPPSWFCLPSVHVRALEAQA.

Residues Ser-557 and Ser-944 each carry the phosphoserine modification.

The protein belongs to the NIBP family. In terms of assembly, component of the multisubunit TRAPP (transport protein particle) complex, which includes at least TRAPPC2, TRAPPC2L, TRAPPC3, TRAPPC3L, TRAPPC4, TRAPPC5, TRAPPC8, TRAPPC9, TRAPPC10, TRAPPC11 and TRAPPC12. Directly interacts with IKBKB and MAP3K14.

It is found in the golgi apparatus. The protein resides in the cis-Golgi network. Its subcellular location is the endoplasmic reticulum. It localises to the cytoplasm. Functions as an activator of NF-kappa-B through increased phosphorylation of the IKK complex. May function in neuronal cells differentiation. May play a role in vesicular transport from endoplasmic reticulum to Golgi. This Bos taurus (Bovine) protein is Trafficking protein particle complex subunit 9 (TRAPPC9).